The primary structure comprises 135 residues: Serine protease inhibitor swm-1 (135 aa).

The signal sequence occupies residues 1 to 16 (MRILVIITCIVAVATA). 10 cysteine pairs are disulfide-bonded: C20/C53, C29/C48, C33/C44, C37/C73, C55/C67, C80/C114, C89/C109, C93/C105, C97/C133, and C116/C127. TIL domains are found at residues 20–73 (CEAN…VSEC) and 80–133 (CPEN…KKDC). N-linked (GlcNAc...) asparagine glycosylation occurs at N83.

In male, expressed in the vas deferens cuboidal cells and, in posterior body wall and male-specific diagonal muscles. In hermaphrodites, expressed in posterior body wall muscles and spermatheca.

The protein localises to the secreted. It is found in the cytoplasmic vesicle. The protein resides in the secretory vesicle lumen. In terms of biological role, serine protease inhibitor. Probably by inhibiting serine protease tyr-5 in males, prevents the maturation of spermatids into mature motile spermatozoa until their transfer into a hermaphrodite. Also required for efficient sperm transfer and thus for male fertility. The sequence is that of Serine protease inhibitor swm-1 from Caenorhabditis elegans.